A 500-amino-acid chain; its full sequence is Probable betaine aldehyde dehydrogenase (500 aa).

249 to 254 is a binding site for NAD(+); it reads GSLATG. The active-site Proton acceptor is the Glu271. Cys305 acts as the Nucleophile in catalysis.

Belongs to the aldehyde dehydrogenase family.

The enzyme catalyses betaine aldehyde + NAD(+) + H2O = glycine betaine + NADH + 2 H(+). It participates in amine and polyamine biosynthesis; betaine biosynthesis via choline pathway; betaine from betaine aldehyde: step 1/1. The protein is Probable betaine aldehyde dehydrogenase (meu8) of Schizosaccharomyces pombe (strain 972 / ATCC 24843) (Fission yeast).